The following is a 729-amino-acid chain: Solute carrier family 15 member 2 (729 aa).

Residues 1-34 (MNPFQKNESKETLFSPVSTEEMLPGPPSPPKKST) are disordered. At 1 to 57 (MNPFQKNESKETLFSPVSTEEMLPGPPSPPKKSTPKLFGSSYPLSIAFIVVNEFCER) the chain is on the cytoplasmic side. Ser9 carries the post-translational modification Phosphoserine. Residue Thr12 is modified to Phosphothreonine. Ser28 carries the phosphoserine modification. Residues 58–78 (FSYYGMKAVLTLYFLYFLHWN) traverse the membrane as a helical segment. The Extracellular portion of the chain corresponds to 79-87 (EDTSTSVYH). A helical transmembrane segment spans residues 88–108 (AFSSLCYFTPILGAAIADSWL). The Cytoplasmic portion of the chain corresponds to 109-113 (GKFKT). Residues 114-134 (IIYLSLVYVLGHVFKSLGAIP) form a helical membrane-spanning segment. At 135 to 139 (ILGGK) the chain is on the extracellular side. The helical transmembrane segment at 140–160 (MLHTILSLVGLSLIALGTGGI) threads the bilayer. Residues 161-183 (KPCVAAFGGDQFEEEHAEARTRY) lie on the Cytoplasmic side of the membrane. Residues 184–204 (FSVFYLSINAGSLISTFITPM) traverse the membrane as a helical segment. Topologically, residues 205–217 (LRGDVKCFGEDCY) are extracellular. A helical membrane pass occupies residues 218–238 (ALAFGIPGLLMVLALVVFAMG). Residues 239–295 (SKMYRKPPPEGNIVAQVTKCIWFAICNRFRNRSEDIPKRQHWLDWAAEKYPKHLIMD) are Cytoplasmic-facing. Residues 296 to 316 (VKALTRILFLYIPLPMFWALL) form a helical membrane-spanning segment. At 317–343 (DQQGSRWTLQANKMDGDLGFFVLQPDQ) the chain is on the extracellular side. A helical membrane pass occupies residues 344–364 (MQVLNPFLVLVFIPLFDLVIY). Residues 365–380 (RLISKCGVNFSSLRKM) are Cytoplasmic-facing. The helical transmembrane segment at 381-401 (AVGMILACLAFAVAALVEIKI) threads the bilayer. The Extracellular segment spans residues 402 to 611 (NGMIHPQPAS…PANKLSIAWQ (210 aa)). The interval 402-611 (NGMIHPQPAS…PANKLSIAWQ (210 aa)) is extracellular domain (ECD). Residues Asn448, Asn472, Asn528, and Asn587 are each glycosylated (N-linked (GlcNAc...) asparagine). A helical membrane pass occupies residues 612–632 (LPQYVLVTAAEVMFSVTGLEF). Over 633 to 643 (SYSQAPSSMKS) the chain is Cytoplasmic. The helical transmembrane segment at 644–664 (VLQAAWLLTVAVGNIIVLIVA) threads the bilayer. At 665–674 (QFSGLVQWAE) the chain is on the extracellular side. Residues 675-695 (FVLFSCLLLVVCLIFSVMGYY) traverse the membrane as a helical segment. The Cytoplasmic segment spans residues 696–729 (YVPLKSEGIHEATEKQIPHIQGNMINLETKNTRL).

Belongs to the major facilitator superfamily. Proton-dependent oligopeptide transporter (POT/PTR) (TC 2.A.17) family. Interacts (via extracellular domain region) with trypsin. As to expression, expressed in kidney brush border cells (at protein level). Highly expressed in macrophages.

It is found in the apical cell membrane. It localises to the cytoplasmic vesicle. The protein localises to the phagosome membrane. Its subcellular location is the cell membrane. It carries out the reaction N-acetyl-D-muramoyl-L-alanyl-D-isoglutamine(out) + 3 H(+)(out) = N-acetyl-D-muramoyl-L-alanyl-D-isoglutamine(in) + 3 H(+)(in). It catalyses the reaction a dipeptide(out) + 2 H(+)(out) = a dipeptide(in) + 2 H(+)(in). The enzyme catalyses glycyl-L-leucine(out) + 2 H(+)(out) = glycyl-L-leucine(in) + 2 H(+)(in). The catalysed reaction is glycyl-L-lysine(out) + 2 H(+)(out) = glycyl-L-lysine(in) + 2 H(+)(in). It carries out the reaction glycyl-L-glutamate(out) + 3 H(+)(out) = glycyl-L-glutamate(in) + 3 H(+)(in). It catalyses the reaction L-alanyl-L-alanine(out) + 2 H(+)(out) = L-alanyl-L-alanine(in) + 2 H(+)(in). The enzyme catalyses an L-amino acid tripeptide(out) + 2 H(+)(out) = an L-amino acid tripeptide(in) + 2 H(+)(in). The catalysed reaction is carnosine(out) + 2 H(+)(out) = carnosine(in) + 2 H(+)(in). Functionally, proton-coupled amino-acid transporter that transports oligopeptides of 2 to 4 amino acids with a preference for dipeptides. Transports neutral and anionic dipeptides with a proton to peptide stoichiometry of 2:1 or 3:1. In kidney, involved in the absorption of circulating di- and tripeptides from the glomerular filtrate. Can also transport beta-lactam antibiotics, such as the aminocephalosporin cefadroxil, and other antiviral and anticancer drugs. Transports the dipeptide-like aminopeptidase inhibitor bestatin. Also able to transport carnosine. Involved in innate immunity by promoting the detection of microbial pathogens by NOD-like receptors (NLRs). Mediates transport of bacterial peptidoglycans across the plasma membrane or, in macrophages, the phagosome membrane: catalyzes the transport of certain bacterial peptidoglycans, such as muramyl dipeptide (MDP), the NOD2 ligand. This chain is Solute carrier family 15 member 2, found in Mus musculus (Mouse).